The chain runs to 223 residues: MDSVLNGRQSRQSLDAPSEPILIGLSGPSCSGKNTASTILQDYGFYCIDADAVSRKVFTEHEKEILNLFQAEAEKRGINLKNENGIDKKAFALLVFSDEELLKKHEAFILPIIEEKIWEEIKRAFTEKPERPILLNAPTLHKTSFIKKCLFILYIDAPFILRLIRAKKRDRLPLKNIWLRFSKQKKFFSQYFFLNADTIVVKNFWSSASLKRKLLQEVKKRGF.

Residues 22–223 enclose the DPCK domain; it reads LIGLSGPSCS…LLQEVKKRGF (202 aa). Position 30–35 (30–35) interacts with ATP; it reads CSGKNT.

This sequence belongs to the CoaE family.

Its subcellular location is the cytoplasm. It catalyses the reaction 3'-dephospho-CoA + ATP = ADP + CoA + H(+). Its pathway is cofactor biosynthesis; coenzyme A biosynthesis; CoA from (R)-pantothenate: step 5/5. Its function is as follows. Catalyzes the phosphorylation of the 3'-hydroxyl group of dephosphocoenzyme A to form coenzyme A. This Treponema denticola (strain ATCC 35405 / DSM 14222 / CIP 103919 / JCM 8153 / KCTC 15104) protein is Dephospho-CoA kinase.